The primary structure comprises 249 residues: tRNA pseudouridine synthase A (249 aa).

Catalysis depends on aspartate 53, which acts as the Nucleophile. Residue tyrosine 111 coordinates substrate.

This sequence belongs to the tRNA pseudouridine synthase TruA family. As to quaternary structure, homodimer.

It carries out the reaction uridine(38/39/40) in tRNA = pseudouridine(38/39/40) in tRNA. Formation of pseudouridine at positions 38, 39 and 40 in the anticodon stem and loop of transfer RNAs. The chain is tRNA pseudouridine synthase A from Streptococcus gordonii (strain Challis / ATCC 35105 / BCRC 15272 / CH1 / DL1 / V288).